The following is a 176-amino-acid chain: NAD(P)H-quinone oxidoreductase subunit 6, chloroplastic (176 aa).

The next 5 helical transmembrane spans lie at 10 to 30 (FLLV…VLLP), 32 to 52 (PIFS…LYIL), 61 to 81 (AQLL…VMFM), 92 to 112 (LWTV…FSLI), and 152 to 172 (FFLP…GAIS).

The protein belongs to the complex I subunit 6 family. In terms of assembly, NDH is composed of at least 16 different subunits, 5 of which are encoded in the nucleus.

It is found in the plastid. The protein localises to the chloroplast thylakoid membrane. It catalyses the reaction a plastoquinone + NADH + (n+1) H(+)(in) = a plastoquinol + NAD(+) + n H(+)(out). The catalysed reaction is a plastoquinone + NADPH + (n+1) H(+)(in) = a plastoquinol + NADP(+) + n H(+)(out). Its function is as follows. NDH shuttles electrons from NAD(P)H:plastoquinone, via FMN and iron-sulfur (Fe-S) centers, to quinones in the photosynthetic chain and possibly in a chloroplast respiratory chain. The immediate electron acceptor for the enzyme in this species is believed to be plastoquinone. Couples the redox reaction to proton translocation, and thus conserves the redox energy in a proton gradient. The chain is NAD(P)H-quinone oxidoreductase subunit 6, chloroplastic (ndhG) from Lobularia maritima (Sweet alyssum).